Reading from the N-terminus, the 350-residue chain is Probable 2-dehydropantoate 2-reductase (350 aa).

Residues 9–14 (GAGSIG) and asparagine 115 contribute to the NADP(+) site. A substrate-binding site is contributed by asparagine 115. Lysine 213 acts as the Proton donor in catalysis. Substrate is bound by residues asparagine 217, asparagine 221, and serine 295. An NADP(+)-binding site is contributed by glutamate 307.

Belongs to the ketopantoate reductase family.

The enzyme catalyses (R)-pantoate + NADP(+) = 2-dehydropantoate + NADPH + H(+). It functions in the pathway cofactor biosynthesis; (R)-pantothenate biosynthesis; (R)-pantoate from 3-methyl-2-oxobutanoate: step 2/2. Catalyzes the NADPH-dependent reduction of ketopantoate into pantoic acid. The sequence is that of Probable 2-dehydropantoate 2-reductase from Schizosaccharomyces pombe (strain 972 / ATCC 24843) (Fission yeast).